Here is a 257-residue protein sequence, read N- to C-terminus: Uxu operon transcriptional regulator (257 aa).

The 69-residue stretch at glutamine 8–asparagine 76 folds into the HTH gntR-type domain. Residues glutamate 36 to isoleucine 55 constitute a DNA-binding region (H-T-H motif).

Functionally, repressor for the uxuRBA operon. The chain is Uxu operon transcriptional regulator (uxuR) from Escherichia coli (strain K12).